The chain runs to 75 residues: Small ribosomal subunit protein bS18 (75 aa).

Belongs to the bacterial ribosomal protein bS18 family. Part of the 30S ribosomal subunit. Forms a tight heterodimer with protein bS6.

Functionally, binds as a heterodimer with protein bS6 to the central domain of the 16S rRNA, where it helps stabilize the platform of the 30S subunit. This chain is Small ribosomal subunit protein bS18, found in Acinetobacter baumannii (strain AB307-0294).